The following is a 381-amino-acid chain: Regulatory protein RapF (381 aa).

Mn(2+) contacts are provided by leucine 40, methionine 43, and glutamate 45. TPR repeat units follow at residues 101–137 (YYFNFFRGMYELDQREYLSAIKFFKKAESKLIFVKDR), 148–181 (SESYYYMKQTYFSMDYARQAYEIYKEHEAYNIRL), 182–215 (LQCHSLFATNFLDLKQYEDAISHFQKAYSMAEAE), 222–255 (GRTLYNIGLCKNSQSQYEDAIPYFKRAIAVFEES), 262–295 (PQAYFLITQIHYKLGKIDKAHEYHSKGMAYSQKA), and 337–370 (EDFAIDVAKYYHERKNFQKASAYFLKVEQVRQLI).

This sequence belongs to the Rap family. Monomer. Is monomeric either alone or in complex with PhrF. Interacts specifically with the C-terminal DNA-binding domain of ComA. Interacts with PhrF.

It localises to the cytoplasm. Its activity is regulated as follows. Inhibited by PhrF, which prevents RapF-ComA interaction. Interaction with PhrF induces a conformational change in RapF, which is propagated to the ComA binding site and causes the dissociation of ComA from RapF. Its function is as follows. Involved in the regulation of genetic competence development. Inhibits the activity of ComA, a transcriptional factor that regulates the development of genetic competence. Acts by binding to ComA, leading to the inhibition of its DNA-binding activity. May also affect transcription independently of ComA. The protein is Regulatory protein RapF (rapF) of Bacillus subtilis (strain 168).